The following is a 375-amino-acid chain: Queuine tRNA-ribosyltransferase (375 aa).

Residue aspartate 90 is the Proton acceptor of the active site. Substrate contacts are provided by residues 90 to 94 (DSGGF), aspartate 144, glutamine 190, and glycine 217. Positions 248–254 (GIGTPHY) are RNA binding. Catalysis depends on aspartate 267, which acts as the Nucleophile. Positions 272–276 (ARITR) are RNA binding; important for wobble base 34 recognition. Zn(2+)-binding residues include cysteine 305, cysteine 307, cysteine 310, and histidine 336.

It belongs to the queuine tRNA-ribosyltransferase family. In terms of assembly, homodimer. Within each dimer, one monomer is responsible for RNA recognition and catalysis, while the other monomer binds to the replacement base PreQ1. Zn(2+) serves as cofactor.

The catalysed reaction is 7-aminomethyl-7-carbaguanine + guanosine(34) in tRNA = 7-aminomethyl-7-carbaguanosine(34) in tRNA + guanine. Its pathway is tRNA modification; tRNA-queuosine biosynthesis. Its function is as follows. Catalyzes the base-exchange of a guanine (G) residue with the queuine precursor 7-aminomethyl-7-deazaguanine (PreQ1) at position 34 (anticodon wobble position) in tRNAs with GU(N) anticodons (tRNA-Asp, -Asn, -His and -Tyr). Catalysis occurs through a double-displacement mechanism. The nucleophile active site attacks the C1' of nucleotide 34 to detach the guanine base from the RNA, forming a covalent enzyme-RNA intermediate. The proton acceptor active site deprotonates the incoming PreQ1, allowing a nucleophilic attack on the C1' of the ribose to form the product. After dissociation, two additional enzymatic reactions on the tRNA convert PreQ1 to queuine (Q), resulting in the hypermodified nucleoside queuosine (7-(((4,5-cis-dihydroxy-2-cyclopenten-1-yl)amino)methyl)-7-deazaguanosine). This chain is Queuine tRNA-ribosyltransferase, found in Borreliella burgdorferi (strain ATCC 35210 / DSM 4680 / CIP 102532 / B31) (Borrelia burgdorferi).